We begin with the raw amino-acid sequence, 467 residues long: A-type ATP synthase subunit B (467 aa).

It belongs to the ATPase alpha/beta chains family. As to quaternary structure, has multiple subunits with at least A(3), B(3), C, D, E, F, H, I and proteolipid K(x).

The protein localises to the cell membrane. In terms of biological role, component of the A-type ATP synthase that produces ATP from ADP in the presence of a proton gradient across the membrane. The B chain is a regulatory subunit. In Methanosphaera stadtmanae (strain ATCC 43021 / DSM 3091 / JCM 11832 / MCB-3), this protein is A-type ATP synthase subunit B.